We begin with the raw amino-acid sequence, 205 residues long: Protease (205 aa).

Active-site residues include His-54, Asp-71, and Cys-120.

It belongs to the peptidase C5 family. As to quaternary structure, interacts with protease cofactor pVI-C; this interaction is necessary for protease activation.

The protein resides in the virion. Its subcellular location is the host nucleus. It catalyses the reaction Cleaves proteins of the adenovirus and its host cell at two consensus sites: -Yaa-Xaa-Gly-Gly-|-Xaa- and -Yaa-Xaa-Gly-Xaa-|-Gly- (in which Yaa is Met, Ile or Leu, and Xaa is any amino acid).. Its activity is regulated as follows. Requires DNA and protease cofactor for maximal activation. Inside nascent virions, becomes partially activated by binding to the viral DNA, allowing it to cleave the cofactor that binds to the protease and fully activates it. Actin, like the viral protease cofactor, seems to act as a cofactor in the cleavage of cytokeratin 18 and of actin itself. In terms of biological role, cleaves viral precursor proteins (pTP, pIIIa, pVI, pVII, pVIII, and pX) inside newly assembled particles giving rise to mature virions. Protease complexed to its cofactor slides along the viral DNA to specifically locate and cleave the viral precursors. Mature virions have a weakened organization compared to the unmature virions, thereby facilitating subsequent uncoating. Without maturation, the particle lacks infectivity and is unable to uncoat. Late in adenovirus infection, in the cytoplasm, may participate in the cytoskeleton destruction. Cleaves host cell cytoskeletal keratins K7 and K18. The protein is Protease of Bos taurus (Bovine).